The primary structure comprises 296 residues: Protoheme IX farnesyltransferase (296 aa).

Helical transmembrane passes span 9 to 29 (VTKP…FLLA), 36 to 56 (YPLF…GCVF), 84 to 104 (AVSL…LWFG), 108 to 128 (LACW…SLYM), 133 to 153 (VYGT…GYCA), 163 to 183 (LILL…IAIF), 209 to 229 (ITLY…GGYA), 234 to 254 (LVVA…GYKV), and 265 to 285 (FGFS…DFMV).

The protein belongs to the UbiA prenyltransferase family. Protoheme IX farnesyltransferase subfamily.

Its subcellular location is the cell inner membrane. It catalyses the reaction heme b + (2E,6E)-farnesyl diphosphate + H2O = Fe(II)-heme o + diphosphate. It participates in porphyrin-containing compound metabolism; heme O biosynthesis; heme O from protoheme: step 1/1. Its function is as follows. Converts heme B (protoheme IX) to heme O by substitution of the vinyl group on carbon 2 of heme B porphyrin ring with a hydroxyethyl farnesyl side group. The chain is Protoheme IX farnesyltransferase from Citrobacter koseri (strain ATCC BAA-895 / CDC 4225-83 / SGSC4696).